We begin with the raw amino-acid sequence, 327 residues long: Apoptosis facilitator Bcl-2-like protein 14 (327 aa).

Ser44 carries the post-translational modification Phosphoserine. The short motif at 212–226 is the BH3 element; sequence IVELLKYSGDQLERK. The short motif at 308–315 is the BH2 element; it reads WIQQHGGW.

This sequence belongs to the Bcl-2 family. In terms of processing, phosphorylated by MELK, leading to inhibit its pro-apoptotic function. Isoform 1 is widely expressed. Isoform 2 is testis-specific.

It localises to the cytoplasm. Its subcellular location is the cytosol. The protein localises to the endomembrane system. Its function is as follows. Plays a role in apoptosis. The protein is Apoptosis facilitator Bcl-2-like protein 14 (BCL2L14) of Homo sapiens (Human).